A 331-amino-acid chain; its full sequence is Tetraacyldisaccharide 4'-kinase (331 aa).

55–62 contributes to the ATP binding site; sequence SVGGNGKT.

The protein belongs to the LpxK family.

The catalysed reaction is a lipid A disaccharide + ATP = a lipid IVA + ADP + H(+). It functions in the pathway glycolipid biosynthesis; lipid IV(A) biosynthesis; lipid IV(A) from (3R)-3-hydroxytetradecanoyl-[acyl-carrier-protein] and UDP-N-acetyl-alpha-D-glucosamine: step 6/6. Its function is as follows. Transfers the gamma-phosphate of ATP to the 4'-position of a tetraacyldisaccharide 1-phosphate intermediate (termed DS-1-P) to form tetraacyldisaccharide 1,4'-bis-phosphate (lipid IVA). The protein is Tetraacyldisaccharide 4'-kinase of Aeromonas salmonicida (strain A449).